A 271-amino-acid polypeptide reads, in one-letter code: Small ribosomal subunit protein uS9m (271 aa).

The transit peptide at 1–11 (MFRSLAKLRCF) directs the protein to the mitochondrion. The tract at residues 251-271 (KVERKKTGQPKARKKYTWVKR) is disordered. Basic residues predominate over residues 252-271 (VERKKTGQPKARKKYTWVKR).

This sequence belongs to the universal ribosomal protein uS9 family. Component of the mitochondrial small ribosomal subunit (mt-SSU). Mature yeast 74S mitochondrial ribosomes consist of a small (37S) and a large (54S) subunit. The 37S small subunit contains a 15S ribosomal RNA (15S mt-rRNA) and at least 32 different proteins. The 54S large subunit contains a 21S rRNA (21S mt-rRNA) and at least 45 different proteins.

Its subcellular location is the mitochondrion. Component of the mitochondrial ribosome (mitoribosome), a dedicated translation machinery responsible for the synthesis of mitochondrial genome-encoded proteins, including at least some of the essential transmembrane subunits of the mitochondrial respiratory chain. The mitoribosomes are attached to the mitochondrial inner membrane and translation products are cotranslationally integrated into the membrane. The protein is Small ribosomal subunit protein uS9m (mrps9) of Schizosaccharomyces pombe (strain 972 / ATCC 24843) (Fission yeast).